The following is a 439-amino-acid chain: Homogentisate 1,2-dioxygenase (439 aa).

Fe cation contacts are provided by His-335, Glu-341, and His-371.

This sequence belongs to the homogentisate dioxygenase family. Fe cation serves as cofactor.

The catalysed reaction is homogentisate + O2 = 4-maleylacetoacetate + H(+). It functions in the pathway amino-acid degradation; L-phenylalanine degradation; acetoacetate and fumarate from L-phenylalanine: step 4/6. This is Homogentisate 1,2-dioxygenase from Drosophila melanogaster (Fruit fly).